Reading from the N-terminus, the 72-residue chain is uncharacterized protein (72 aa).

The interval 51–72 (AKGGRQRGETVVVDDQCKEHKE) is disordered.

Belongs to the YiiE family.

This is an uncharacterized protein from Escherichia coli O6:K15:H31 (strain 536 / UPEC).